The primary structure comprises 663 residues: Cytochrome bo(3) ubiquinol oxidase subunit 1 (663 aa).

The Periplasmic portion of the chain corresponds to 1 to 16; sequence MFGKLSLDAVPFHEPI. The chain crosses the membrane as a helical span at residues 17–35; that stretch reads VMVTIAGIILGGLALVGLI. At 36 to 52 the chain is on the cytoplasmic side; sequence TYFGKWTYLWKEWLTSV. A helical transmembrane segment spans residues 53–80; sequence DHKRLGIMYIIVAIVMLLRGFADAIMMR. Residues R71 and D75 each contribute to the ubiquinone-8 site. The Periplasmic portion of the chain corresponds to 81-95; sequence SQQALASAGEAGFLP. The helical transmembrane segment at 96–132 threads the bilayer; the sequence is PHHYDQIFTAHGVIMIFFVAMPFVIGLMNLVVPLQIG. H98 is a binding site for ubiquinone-8. Position 106 (H106) interacts with heme b. Topologically, residues 133-137 are cytoplasmic; sequence ARDVA. A helical transmembrane segment spans residues 138–161; that stretch reads FPFLNNLSFWFTVVGVILVNVSLG. Residues 162-184 lie on the Periplasmic side of the membrane; sequence VGEFAQTGWLAYPPLSGIEYSPG. W170 is a heme b binding site. The helical transmembrane segment at 185–215 threads the bilayer; it reads VGVDYWIWSLQLSGIGTTLTGINFFVTILKM. At 216–224 the chain is on the cytoplasmic side; the sequence is RAPGMTMFK. The chain crosses the membrane as a helical span at residues 225–260; it reads MPVFTWASLCANVLIIASFPILTVTVALLTLDRYLG. Residues 261–270 are Periplasmic-facing; the sequence is THFFTNDMGG. A helical transmembrane segment spans residues 271-307; it reads NMMMYINLIWAWGHPEVYILILPVFGVFSEIAATFSR. H284 lines the Cu(2+) pocket. Positions 284–288 form a cross-link, 1'-histidyl-3'-tyrosine (His-Tyr); sequence HPEVY. Residue Y288 participates in Fe(II)-heme o binding. Residues 308 to 311 lie on the Cytoplasmic side of the membrane; it reads KRLF. Residues 312–326 form a helical membrane-spanning segment; the sequence is GYTSLVWATVCITVL. Topologically, residues 327 to 340 are periplasmic; that stretch reads SFIVWLHHFFTMGA. Cu(2+) contacts are provided by H333 and H334. The chain crosses the membrane as a helical span at residues 341–369; sequence GANVNAFFGITTMIIAIPTGVKIFNWLFT. Topologically, residues 370–377 are cytoplasmic; it reads MYQGRIVF. Residues 378–409 form a helical membrane-spanning segment; it reads HSAMLWTIGFIVTFSVGGMTGVLLAVPGADFV. The Periplasmic portion of the chain corresponds to 410-412; it reads LHN. H411 and H419 together coordinate Fe(II)-heme o. The chain crosses the membrane as a helical span at residues 413 to 445; that stretch reads SLFLIAHFHNVIIGGVVFGCFAGMTYWWPKAFG. H421 is a binding site for heme b. Over 446 to 448 the chain is Cytoplasmic; the sequence is FKL. The helical transmembrane segment at 449–477 threads the bilayer; sequence NETWGKRAFWFWIIGFFVAFMPLYALGFM. Over 478-489 the chain is Periplasmic; the sequence is GMTRRLSQQIDP. 2 residues coordinate heme b: R481 and R482. A helical transmembrane segment spans residues 490–521; the sequence is QFHTMLMIAASGAVLIALGILCLVIQMYVSIR. Topologically, residues 522 to 587 are cytoplasmic; it reads DRDQNRDLTG…DHYEEIHMPK (66 aa). The helical transmembrane segment at 588 to 606 threads the bilayer; that stretch reads NSGAGIVIAAFSTIFGFAM. The Periplasmic segment spans residues 607–613; sequence IWHIWWL. A helical transmembrane segment spans residues 614 to 632; sequence AIVGFAGMIITWIVKSFDE. Residues 633-663 lie on the Cytoplasmic side of the membrane; the sequence is DVDYYVPVAEIEKLENQHFDEITKAGLKNGN.

Belongs to the heme-copper respiratory oxidase family. The cytochrome bo(3) ubiquinol oxidase complex is a heterooctamer of two A chains, two B chains, two C chains and two D chains. Requires Cu(2+) as cofactor. It depends on heme b as a cofactor. The cofactor is Fe(II)-heme o.

The protein localises to the cell inner membrane. The enzyme catalyses 2 a ubiquinol + O2 + n H(+)(in) = 2 a ubiquinone + 2 H2O + n H(+)(out). Its function is as follows. Cytochrome bo(3) ubiquinol oxidase is the terminal enzyme in the aerobic respiratory chain of E.coli that predominates when cells are grown at high aeration. Catalyzes the four-electron reduction of O2 to water, using a ubiquinol as a membrane soluble electron donor for molecular oxygen reduction; ubiquinol-8 is the natural substrate for E.coli. Has proton pump activity across the membrane in addition to electron transfer, pumping 2 protons/electron and generating a proton motive force. All the redox centers of this enzyme complex are located within the largest subunit, subunit I. Protons are probably pumped via D- and K- channels found in this subunit. This is Cytochrome bo(3) ubiquinol oxidase subunit 1 (cyoB) from Escherichia coli O157:H7.